Reading from the N-terminus, the 86-residue chain is Kunitz-type anticoagulant protein Ir-CPI (86 aa).

Positions 1 to 19 (MPFIFVVSFAILACIVVDT) are cleaved as a signal peptide. The 51-residue stretch at 31–81 (CKLPPDDGPCRARIPSYYFDRKTKTCKEFMYGGCEGNENNFENITTCQEEC) folds into the BPTI/Kunitz inhibitor domain. Disulfide bonds link Cys-31-Cys-81, Cys-40-Cys-64, and Cys-56-Cys-77. N-linked (GlcNAc...) asparagine glycosylation occurs at Asn-73.

Salivary gland.

The protein localises to the secreted. Its function is as follows. Anticoagulant protein. Increases fibrinolysis time. Inhibits thrombin generation. Inhibits the generation of the active forms of host coagulation factor XII, factor XI and plasma kallikrein. The protein is Kunitz-type anticoagulant protein Ir-CPI of Ixodes ricinus (Common tick).